A 1067-amino-acid chain; its full sequence is Tricorn protease homolog 1 (1067 aa).

Positions 518–551 (TTPSPFGPQRHGRPFETPDREETPDSEGTPTTRI) are disordered. Residues 530-540 (RPFETPDREET) are compositionally biased toward basic and acidic residues. The Charge relay system role is filled by H740. A PDZ-like region spans residues 754–851 (RQGLLGADLS…HAVVVPLADE (98 aa)). Residue G914 participates in substrate binding. S961 serves as the catalytic Nucleophile. E1019 functions as the Charge relay system in the catalytic mechanism.

The protein belongs to the peptidase S41B family. In terms of assembly, forms a homohexameric complex; it is not known if it assembles into higher-order structures.

The protein resides in the cytoplasm. Its activity is regulated as follows. Stimulated by MgCl2. In terms of biological role, degrades oligopeptides in a sequential manner. The sequence is that of Tricorn protease homolog 1 (tri1) from Streptomyces coelicolor (strain ATCC BAA-471 / A3(2) / M145).